Consider the following 247-residue polypeptide: Ferredoxin:CoB-CoM heterodisulfide reductase subunit C (247 aa).

Residues 32 to 62 (TPESLGLDRCIQCGACTASCPAARFTDYSPR) form the 4Fe-4S ferredoxin-type domain. Residues Cys41, Cys44, Cys47, Cys51, Cys84, Cys87, Cys90, and Cys94 each contribute to the [4Fe-4S] cluster site. Positions 216 to 240 (RTGTSCTEKKKNSGDLGFESDREYT) are enriched in basic and acidic residues. Residues 216–247 (RTGTSCTEKKKNSGDLGFESDREYTGQEALTV) are disordered.

Belongs to the HdrC family. The ferredoxin:CoB-CoM heterodisulfide reductase is composed of three subunits; HdrA1, HdrB1 and HdrC1. Requires [4Fe-4S] cluster as cofactor.

The protein localises to the cytoplasm. The catalysed reaction is coenzyme B + coenzyme M + 2 oxidized [2Fe-2S]-[ferredoxin] = coenzyme M-coenzyme B heterodisulfide + 2 reduced [2Fe-2S]-[ferredoxin] + 2 H(+). It participates in cofactor metabolism; coenzyme M-coenzyme B heterodisulfide reduction; coenzyme B and coenzyme M from coenzyme M-coenzyme B heterodisulfide: step 1/1. In terms of biological role, part of a complex that catalyzes the reversible reduction of CoM-S-S-CoB to the thiol-coenzymes H-S-CoM (coenzyme M) and H-S-CoB (coenzyme B). Probably involved in methylotrophic methanogenesis but not in aceticlastic methanogenesis. The polypeptide is Ferredoxin:CoB-CoM heterodisulfide reductase subunit C (Methanosarcina acetivorans (strain ATCC 35395 / DSM 2834 / JCM 12185 / C2A)).